The chain runs to 134 residues: Seminal plasma protein PDC-109 (134 aa).

The N-terminal stretch at 1 to 25 (MALQLGLFLIWAGVSVFLQLDPVNG) is a signal peptide. O-linked (GalNAc...) threonine glycosylation is present at T36. Fibronectin type-II domains follow at residues 44–88 (PEDE…YCAQ) and 89–134 (RDYA…WKYC). 4 cysteine pairs are disulfide-bonded: C49–C73, C63–C86, C94–C119, and C108–C134.

The protein belongs to the seminal plasma protein family. In terms of assembly, homodimer. Post-translationally, O-linked glycan consists of Gal-GalNAc disaccharide which is modified with a sialic acid residue (macro- and/or microheterogeneity account for differences between BSP-A1 and BSP-A2). Major component of seminal plasma.

It localises to the secreted. Functionally, could enhance the fertilizing capacity of bull spermatozoa upon interaction with heparin-like glycosaminoglycans present in the female genital tract. Exhibits both simulatory and inhibitory actions on the release of pituitary gonadotropins. In Bos taurus (Bovine), this protein is Seminal plasma protein PDC-109.